The primary structure comprises 177 residues: Small ribosomal subunit protein uS4 (177 aa).

Residues 104–168 (RRLQTLVFRK…SPMASESHPE (65 aa)) form the S4 RNA-binding domain. The disordered stretch occupies residues 157-177 (PNSPMASESHPERTDSVKDAE). The span at 165–177 (SHPERTDSVKDAE) shows a compositional bias: basic and acidic residues.

It belongs to the universal ribosomal protein uS4 family. In terms of assembly, part of the 30S ribosomal subunit. Contacts protein S5. The interaction surface between S4 and S5 is involved in control of translational fidelity.

Functionally, one of the primary rRNA binding proteins, it binds directly to 16S rRNA where it nucleates assembly of the body of the 30S subunit. In terms of biological role, with S5 and S12 plays an important role in translational accuracy. The protein is Small ribosomal subunit protein uS4 of Methanococcus aeolicus (strain ATCC BAA-1280 / DSM 17508 / OCM 812 / Nankai-3).